Here is a 335-residue protein sequence, read N- to C-terminus: Fructose-1,6-bisphosphatase class 1 1 (335 aa).

Positions 92, 114, 116, and 117 each coordinate Mg(2+). Substrate is bound by residues 117 to 120, N209, and K275; that span reads DGSS. E281 contacts Mg(2+).

The protein belongs to the FBPase class 1 family. Homotetramer. The cofactor is Mg(2+).

The protein resides in the cytoplasm. It catalyses the reaction beta-D-fructose 1,6-bisphosphate + H2O = beta-D-fructose 6-phosphate + phosphate. Its pathway is carbohydrate biosynthesis; gluconeogenesis. This is Fructose-1,6-bisphosphatase class 1 1 from Polaromonas naphthalenivorans (strain CJ2).